A 628-amino-acid polypeptide reads, in one-letter code: Exonuclease V, mitochondrial (628 aa).

The transit peptide at 1-21 (MSRFWHFKKFYFTSCYSMQRM) directs the protein to the mitochondrion. A disordered region spans residues 37–58 (TSEHEQVQSISKEESRSLSSND). Over residues 38–52 (SEHEQVQSISKEESR) the composition is skewed to basic and acidic residues. [4Fe-4S] cluster-binding residues include Cys164, Cys586, Cys589, and Cys595.

Belongs to the EXO5 family. Monomer. Mg(2+) serves as cofactor. It depends on [4Fe-4S] cluster as a cofactor.

The protein localises to the mitochondrion. Functionally, single strand DNA specific 5' exonuclease involved in mitochondrial DNA replication and recombination. Releases dinucleotides as main products of catalysis. Has the capacity to slide across 5'double-stranded DNA or 5'RNA sequences and resumes cutting two nucleotides downstream of the double-stranded-to-single-stranded junction or RNA-to-DNA junction, respectively. The chain is Exonuclease V, mitochondrial (DEM1) from Candida albicans (strain SC5314 / ATCC MYA-2876) (Yeast).